A 527-amino-acid polypeptide reads, in one-letter code: DUF21 domain-containing protein At1g47330 (527 aa).

Residues 1 to 15 (MSSDIPCCGTTFSLY) lie on the Extracellular side of the membrane. The region spanning 8-191 (CGTTFSLYVV…GKGGDLTTDE (184 aa)) is the CNNM transmembrane domain. The chain crosses the membrane as a helical span at residues 16–36 (VVIIIALVAFAGLMAGLTLGL). The Cytoplasmic segment spans residues 37-70 (MSLGLVDLEVLIKSGRPQDRINAGKIFPVVKNQH). Residues 71-91 (LLLCTLLIGNSMAMEALPIFL) traverse the membrane as a helical segment. Residues 92 to 93 (DK) are Extracellular-facing. The chain crosses the membrane as a helical span at residues 94–114 (IVPPWLAILLSVTLILVFGEI). Residues 115–126 (MPQAVCTRYGLK) lie on the Cytoplasmic side of the membrane. A helical membrane pass occupies residues 127–147 (VGAIMAPFVRVLLVLFFPISY). Residues 148–527 (PISKVLDWML…PKHEESTQTL (380 aa)) lie on the Extracellular side of the membrane. 3 consecutive CBS domains span residues 210–271 (MTPI…EVPL), 274–334 (MSMR…TKDE), and 366–435 (KSEN…ILDE). Disordered stretches follow at residues 307 to 335 (KDLD…KDEL), 358 to 384 (ETGD…LLAA), and 464 to 527 (ITQS…TQTL). Ser-315 carries the post-translational modification Phosphoserine. Over residues 358–369 (ETGDAKSGKSEN) the composition is skewed to basic and acidic residues. The span at 464–501 (ITQSSSGSTSPNQTSHMATPDSSPTTKPSNSSPTRKPS) shows a compositional bias: low complexity. Asn-475 carries N-linked (GlcNAc...) asparagine glycosylation. Over residues 502 to 515 (VSSPTREPSDSSHS) the composition is skewed to polar residues. The span at 518 to 527 (PKHEESTQTL) shows a compositional bias: basic and acidic residues.

The protein localises to the membrane. The sequence is that of DUF21 domain-containing protein At1g47330 (CBSDUF7) from Arabidopsis thaliana (Mouse-ear cress).